The following is a 1798-amino-acid chain: Laminin subunit beta-2 (1798 aa).

An N-terminal signal peptide occupies residues 1 to 32 (MELTSRERGRGQPLPWELRLGLLLSVLAATLA). Positions 43–282 (SRGSCYPATG…ALYELVVRGN (240 aa)) constitute a Laminin N-terminal domain. A glycan (N-linked (GlcNAc...) asparagine) is linked at asparagine 248. 19 disulfides stabilise this stretch: cysteine 283-cysteine 292, cysteine 285-cysteine 310, cysteine 312-cysteine 321, cysteine 324-cysteine 344, cysteine 347-cysteine 356, cysteine 349-cysteine 374, cysteine 377-cysteine 386, cysteine 389-cysteine 407, cysteine 410-cysteine 423, cysteine 412-cysteine 438, cysteine 440-cysteine 449, cysteine 452-cysteine 467, cysteine 470-cysteine 484, cysteine 472-cysteine 491, cysteine 493-cysteine 502, cysteine 505-cysteine 519, cysteine 522-cysteine 534, cysteine 524-cysteine 541, and cysteine 543-cysteine 552. Laminin EGF-like domains lie at 283–346 (CFCY…ACRK), 347–409 (CECH…VCRS), 410–469 (CDCD…GCRR), and 470–521 (CQCN…GCRP). Asparagine 368 carries an N-linked (GlcNAc...) asparagine glycan. A Laminin EGF-like 5; truncated domain is found at 522–552 (CDCDVGGALDPQCDEGTGQCHCRQHMVGRRC). The region spanning 561 to 777 (RPFLDHLIWE…LLISLSTLIY (217 aa)) is the Laminin IV type B domain. 32 disulfide bridges follow: cysteine 783–cysteine 795, cysteine 785–cysteine 802, cysteine 804–cysteine 813, cysteine 816–cysteine 828, cysteine 831–cysteine 843, cysteine 833–cysteine 850, cysteine 852–cysteine 861, cysteine 864–cysteine 874, cysteine 877–cysteine 886, cysteine 879–cysteine 893, cysteine 896–cysteine 905, cysteine 908–cysteine 924, cysteine 927–cysteine 943, cysteine 929–cysteine 954, cysteine 956–cysteine 965, cysteine 968–cysteine 983, cysteine 986–cysteine 1000, cysteine 988–cysteine 1007, cysteine 1010–cysteine 1019, cysteine 1022–cysteine 1035, cysteine 1038–cysteine 1058, cysteine 1040–cysteine 1065, cysteine 1067–cysteine 1076, cysteine 1079–cysteine 1092, cysteine 1095–cysteine 1107, cysteine 1097–cysteine 1114, cysteine 1116–cysteine 1125, cysteine 1128–cysteine 1140, cysteine 1143–cysteine 1155, cysteine 1145–cysteine 1162, cysteine 1164–cysteine 1173, and cysteine 1176–cysteine 1187. 8 consecutive Laminin EGF-like domains span residues 783–830 (CQCN…GCQA), 831–876 (CQCS…SCRP), 877–926 (CVCN…QCRP), 927–985 (CPCP…RCQL), 986–1037 (CECS…SCHR), 1038–1094 (CTCN…GCQP), 1095–1142 (CACH…QCHA), and 1143–1189 (CDCD…ACHP). Asparagine 1085 carries an N-linked (GlcNAc...) asparagine glycan. The interval 1190–1409 (CHACFGDWDR…LSLTDINELV (220 aa)) is domain II. N-linked (GlcNAc...) asparagine glycans are attached at residues asparagine 1249, asparagine 1308, and asparagine 1348. Residues 1253-1319 (ASTAQLVEAT…TLRQLDQHLD (67 aa)) adopt a coiled-coil conformation. A disordered region spans residues 1338-1364 (SQSAEAERRANTSALAVPSPVSNSASA). Residues 1350-1363 (SALAVPSPVSNSAS) show a composition bias toward low complexity. A domain alpha region spans residues 1410–1442 (CGAPGDAPCATSPCGGAGCRDEDGQPRCGGLSC). The segment at 1443-1798 (NGAAATADLA…LQVQIYNTCQ (356 aa)) is domain I. Positions 1472-1526 (SILSRVAETRRQASEAQQRAQAALDKANASRGQVEQANQELQELIQSVKDFLNQE) form a coiled coil. An N-linked (GlcNAc...) asparagine glycan is attached at asparagine 1499. Serine 1532 is modified (phosphoserine; by FAM20C). A coiled-coil region spans residues 1577–1790 (VGDVRRAEQL…RSVLQAINLQ (214 aa)).

In terms of assembly, laminin is a complex glycoprotein, consisting of three different polypeptide chains (alpha, beta, gamma), which are bound to each other by disulfide bonds into a cross-shaped molecule comprising one long and three short arms with globules at each end. Beta-2 is a subunit of laminin-3 (laminin-121 or S-laminin), laminin-4 (laminin-221 or S-merosin), laminin-7 (laminin-321 or KS-laminin), laminin-9 (laminin-421), laminin-11 (laminin-521), laminin-14 (laminin-423) and laminin-15 (laminin-523).

The protein resides in the secreted. The protein localises to the extracellular space. Its subcellular location is the extracellular matrix. It is found in the basement membrane. Its function is as follows. Binding to cells via a high affinity receptor, laminin is thought to mediate the attachment, migration and organization of cells into tissues during embryonic development by interacting with other extracellular matrix components. This chain is Laminin subunit beta-2 (LAMB2), found in Homo sapiens (Human).